A 142-amino-acid chain; its full sequence is Large ribosomal subunit protein uL11 (142 aa).

Belongs to the universal ribosomal protein uL11 family. Part of the ribosomal stalk of the 50S ribosomal subunit. Interacts with L10 and the large rRNA to form the base of the stalk. L10 forms an elongated spine to which L12 dimers bind in a sequential fashion forming a multimeric L10(L12)X complex. One or more lysine residues are methylated.

In terms of biological role, forms part of the ribosomal stalk which helps the ribosome interact with GTP-bound translation factors. The polypeptide is Large ribosomal subunit protein uL11 (Brucella anthropi (strain ATCC 49188 / DSM 6882 / CCUG 24695 / JCM 21032 / LMG 3331 / NBRC 15819 / NCTC 12168 / Alc 37) (Ochrobactrum anthropi)).